Here is a 164-residue protein sequence, read N- to C-terminus: CASP-like protein 1C2 (164 aa).

Residues 1–8 (MAVELKKV) are Cytoplasmic-facing. A helical transmembrane segment spans residues 9 to 29 (FSTILRFLALAATVVAVIVMI). Topologically, residues 30–53 (RSHDSAIVLNLTFSAKYNNTPAFK) are extracellular. N-linked (GlcNAc...) asparagine glycosylation occurs at N39. Residues 54-74 (YFVIAEGIASVYTIIVIFLWS) form a helical membrane-spanning segment. The Cytoplasmic segment spans residues 75-80 (KGLLGR). Residues 81 to 101 (LIVILDMVTTVLLTSSISAAL) traverse the membrane as a helical segment. Topologically, residues 102 to 129 (AIAQVGKKGNSHAGWLPVCGQVPKFCDQ) are extracellular. A helical membrane pass occupies residues 130–150 (AIIALVAGFVAAIVYFMLLLC). Residues 151–164 (SLHAVLTPIFAVKP) lie on the Cytoplasmic side of the membrane.

This sequence belongs to the Casparian strip membrane proteins (CASP) family. As to quaternary structure, homodimer and heterodimers.

Its subcellular location is the cell membrane. In Ricinus communis (Castor bean), this protein is CASP-like protein 1C2.